A 167-amino-acid chain; its full sequence is uncharacterized protein (167 aa).

Positions 1-25 (MPFSVTKFSLIFVALLLAEALVAQS) are cleaved as a signal peptide.

This is an uncharacterized protein from Caenorhabditis elegans.